We begin with the raw amino-acid sequence, 189 residues long: T-cell surface glycoprotein CD3 epsilon chain (189 aa).

The signal sequence occupies residues 1–21 (MRWNTFWGILCLSLLAVGTCQ). In terms of domain architecture, Ig-like spans 23-99 (DAENIEYKVS…KNTYLYLKAR (77 aa)). Residues 23 to 108 (DAENIEYKVS…RVCEYCVEVD (86 aa)) lie on the Extracellular side of the membrane. An intrachain disulfide couples Cys42 to Cys83. Residues 109–134 (LTAVAIIIIVDICITLGLLMVIYYWS) traverse the membrane as a helical segment. Residues 135–189 (KNRKAKAKPVTRGTGAGSRPRGQNKERPPPVPNPDYEPIRKGQRDLYSGLNQRAV) are Cytoplasmic-facing. The interval 143 to 189 (PVTRGTGAGSRPRGQNKERPPPVPNPDYEPIRKGQRDLYSGLNQRAV) is disordered. The segment at 157–174 (QNKERPPPVPNPDYEPIR) is NUMB-binding region. The ITAM domain occupies 160–187 (ERPPPVPNPDYEPIRKGQRDLYSGLNQR). The interval 161–168 (RPPPVPNP) is proline-rich sequence. Tyr170 and Tyr181 each carry phosphotyrosine.

In terms of assembly, the TCR-CD3 complex is composed of a CD3D/CD3E and a CD3G/CD3E heterodimers that preferentially associate with TCRalpha and TCRbeta, respectively, to form TCRalpha/CD3E/CD3G and TCRbeta/CD3G/CD3E trimers. In turn, the hexamer interacts with CD3Z homodimer to form the TCR-CD3 complex. Alternatively, TCRalpha and TCRbeta can be replaced by TCRgamma and TCRdelta. Interacts with CD6. Interacts (via Proline-rich sequence) with NCK1; the interaction is ligand dependent but independent of tyrosine kinase activation. In terms of processing, phosphorylated on Tyr residues after T-cell receptor triggering by LCK in association with CD4/CD8.

The protein resides in the cell membrane. Its function is as follows. Part of the TCR-CD3 complex present on T-lymphocyte cell surface that plays an essential role in adaptive immune response. When antigen presenting cells (APCs) activate T-cell receptor (TCR), TCR-mediated signals are transmitted across the cell membrane by the CD3 chains CD3D, CD3E, CD3G and CD3Z. All CD3 chains contain immunoreceptor tyrosine-based activation motifs (ITAMs) in their cytoplasmic domain. Upon TCR engagement, these motifs become phosphorylated by Src family protein tyrosine kinases LCK and FYN, resulting in the activation of downstream signaling pathways. In addition of this role of signal transduction in T-cell activation, CD3E plays an essential role in correct T-cell development. Also participates in internalization and cell surface down-regulation of TCR-CD3 complexes via endocytosis sequences present in CD3E cytosolic region. In addition to its role as a TCR coreceptor, it serves as a receptor for ITPRIPL1. Ligand recognition inhibits T-cell activation by promoting interaction with NCK1, which prevents CD3E-ZAP70 interaction and blocks the ERK-NFkB signaling cascade and calcium influx. This chain is T-cell surface glycoprotein CD3 epsilon chain (Cd3e), found in Mus musculus (Mouse).